We begin with the raw amino-acid sequence, 209 residues long: MILKKRSKSSKNWLKRNFNDPYIKERNKKKLRSRSWFKLKEIDESEKIFKKGMNVIDLGSNPGGWSEYTLKKIGKSGKIFACDILPMRFLKDIVFFCGDISNSDFLKKIFLFLDKYSWNVVMSDISPNICGYSVIDNSNMFKLSNIVLKISRHVLSNNGYLIIKLFQGYGFNKYMKKIRNIFELVKIYKPNASRVNSREVFIIAYGCKK.

The S-adenosyl-L-methionine site is built by G63, W65, D83, D99, and D124. K164 serves as the catalytic Proton acceptor.

The protein belongs to the class I-like SAM-binding methyltransferase superfamily. RNA methyltransferase RlmE family.

The protein localises to the cytoplasm. It catalyses the reaction uridine(2552) in 23S rRNA + S-adenosyl-L-methionine = 2'-O-methyluridine(2552) in 23S rRNA + S-adenosyl-L-homocysteine + H(+). In terms of biological role, specifically methylates the uridine in position 2552 of 23S rRNA at the 2'-O position of the ribose in the fully assembled 50S ribosomal subunit. The polypeptide is Ribosomal RNA large subunit methyltransferase E (Buchnera aphidicola subsp. Cinara cedri (strain Cc)).